The sequence spans 311 residues: Ribosomal RNA small subunit methyltransferase A (311 aa).

6 residues coordinate S-adenosyl-L-methionine: Asn29, Val31, Gly56, Glu77, Asp107, and Asn126.

Belongs to the class I-like SAM-binding methyltransferase superfamily. rRNA adenine N(6)-methyltransferase family. RsmA subfamily.

The protein resides in the cytoplasm. It carries out the reaction adenosine(1518)/adenosine(1519) in 16S rRNA + 4 S-adenosyl-L-methionine = N(6)-dimethyladenosine(1518)/N(6)-dimethyladenosine(1519) in 16S rRNA + 4 S-adenosyl-L-homocysteine + 4 H(+). Specifically dimethylates two adjacent adenosines (A1518 and A1519) in the loop of a conserved hairpin near the 3'-end of 16S rRNA in the 30S particle. May play a critical role in biogenesis of 30S subunits. The sequence is that of Ribosomal RNA small subunit methyltransferase A from Mycolicibacterium vanbaalenii (strain DSM 7251 / JCM 13017 / BCRC 16820 / KCTC 9966 / NRRL B-24157 / PYR-1) (Mycobacterium vanbaalenii).